Consider the following 290-residue polypeptide: Inositol-1-monophosphatase (290 aa).

Glu-83, Asp-104, Ile-106, and Asp-107 together coordinate Mg(2+). Glu-83 lines the substrate pocket. Residues 106–109, Arg-206, and Asp-235 contribute to the substrate site; that span reads IDGT. Residue Asp-235 participates in Mg(2+) binding.

This sequence belongs to the inositol monophosphatase superfamily. The cofactor is Mg(2+).

The enzyme catalyses a myo-inositol phosphate + H2O = myo-inositol + phosphate. This chain is Inositol-1-monophosphatase (suhB), found in Mycobacterium bovis (strain ATCC BAA-935 / AF2122/97).